Here is a 274-residue protein sequence, read N- to C-terminus: Sulfur carrier protein FdhD (274 aa).

Cys121 serves as the catalytic Cysteine persulfide intermediate. 258–263 (FSKPGR) provides a ligand contact to Mo-bis(molybdopterin guanine dinucleotide).

Belongs to the FdhD family.

The protein localises to the cytoplasm. Required for formate dehydrogenase (FDH) activity. Acts as a sulfur carrier protein that transfers sulfur from IscS to the molybdenum cofactor prior to its insertion into FDH. The polypeptide is Sulfur carrier protein FdhD (Yersinia pseudotuberculosis serotype O:1b (strain IP 31758)).